Reading from the N-terminus, the 90-residue chain is Auxin-responsive protein SAUR22 (90 aa).

It belongs to the ARG7 family.

The protein localises to the cell membrane. Its function is as follows. Functions as a positive effector of cell expansion through modulation of auxin transport. The sequence is that of Auxin-responsive protein SAUR22 from Arabidopsis thaliana (Mouse-ear cress).